A 67-amino-acid chain; its full sequence is Bowman-Birk type proteinase inhibitor A4 (67 aa).

Disulfide bonds link Cys-10/Cys-29, Cys-16/Cys-27, Cys-36/Cys-43, and Cys-40/Cys-57.

This sequence belongs to the Bowman-Birk serine protease inhibitor family. As to expression, expressed in bulb (at protein level).

Functionally, serine protease inhibitor. Inhibits trypsin (Ki=12nM) and weakly inhibits chymotrypsin with (Ki=460nm). Does not inhibit bacterial subtilisin. This Hyacinthus orientalis (Common hyacinth) protein is Bowman-Birk type proteinase inhibitor A4.